The primary structure comprises 298 residues: Probable pyridoxal 5'-phosphate synthase subunit SNZ2 (298 aa).

Position 21 (aspartate 21) interacts with D-ribose 5-phosphate. Catalysis depends on lysine 78, which acts as the Schiff-base intermediate with D-ribose 5-phosphate. D-ribose 5-phosphate-binding positions include glycine 150, glycine 213, and 234–235 (GS).

It belongs to the PdxS/SNZ family. As to quaternary structure, homohexamer. Interacts with THI11.

It carries out the reaction aldehydo-D-ribose 5-phosphate + D-glyceraldehyde 3-phosphate + L-glutamine = pyridoxal 5'-phosphate + L-glutamate + phosphate + 3 H2O + H(+). It participates in cofactor biosynthesis; pyridoxal 5'-phosphate biosynthesis. Functionally, catalyzes the formation of pyridoxal 5'-phosphate from ribose 5-phosphate (RBP), glyceraldehyde 3-phosphate (G3P) and ammonia. The ammonia is provided by a SNO isoform. Can also use ribulose 5-phosphate and dihydroxyacetone phosphate as substrates, resulting from enzyme-catalyzed isomerization of RBP and G3P, respectively. In Saccharomyces cerevisiae (strain ATCC 204508 / S288c) (Baker's yeast), this protein is Probable pyridoxal 5'-phosphate synthase subunit SNZ2 (SNZ2).